The following is a 238-amino-acid chain: Immunoglobulin superfamily member 6 (238 aa).

The N-terminal stretch at 1 to 27 (MGPVSTSRRGLRLGISLILLQVGVVGA) is a signal peptide. The Extracellular portion of the chain corresponds to 28-153 (CTVSVLQPGY…RLFSREVHSL (126 aa)). The Ig-like C2-type domain occupies 30–134 (VSVLQPGYLE…EPVPTAKQTG (105 aa)). An intrachain disulfide couples cysteine 51 to cysteine 118. A helical membrane pass occupies residues 154-174 (LIVLLALLAVYVTGVCVIFIV). At 175 to 238 (LFRSKSNTPR…RKALPSPGRP (64 aa)) the chain is on the cytoplasmic side. Positions 215-230 (ETSHQPEQDGNYENRK) are enriched in basic and acidic residues. The segment at 215-238 (ETSHQPEQDGNYENRKALPSPGRP) is disordered.

It localises to the membrane. The sequence is that of Immunoglobulin superfamily member 6 (Igsf6) from Rattus norvegicus (Rat).